The primary structure comprises 82 residues: Small ribosomal subunit protein uS17 (82 aa).

Belongs to the universal ribosomal protein uS17 family. As to quaternary structure, part of the 30S ribosomal subunit.

Functionally, one of the primary rRNA binding proteins, it binds specifically to the 5'-end of 16S ribosomal RNA. The protein is Small ribosomal subunit protein uS17 of Azorhizobium caulinodans (strain ATCC 43989 / DSM 5975 / JCM 20966 / LMG 6465 / NBRC 14845 / NCIMB 13405 / ORS 571).